We begin with the raw amino-acid sequence, 478 residues long: Ninja-family protein 8 (478 aa).

3 disordered regions span residues 1–247, 337–374, and 454–478; these read MDDD…LTPG, FTAK…EKKA, and DAPA…SAEN. Positions 23 to 35 are enriched in basic and acidic residues; it reads KARDAPLEPKAEP. Residues 169-179 are compositionally biased toward polar residues; sequence ISISTDDGSTG. Residues 180–189 show a composition bias toward acidic residues; it reads ENEDVAESEA. The segment covering 233-242 has biased composition (low complexity); it reads SFSGSESSSG. The segment covering 339–358 has biased composition (basic and acidic residues); that stretch reads AKDKADQTGTKQVDDGKKPQ.

Belongs to the Ninja family.

The protein localises to the nucleus. This Zea mays (Maize) protein is Ninja-family protein 8.